The primary structure comprises 500 residues: NAD(P)H-quinone oxidoreductase chain 4, chloroplastic (500 aa).

Helical transmembrane passes span 4–24, 37–57, 84–104, 111–129, 134–154, 167–187, 208–228, 242–262, 272–292, 305–325, 330–350, 374–396, 416–436, and 462–482; these read FPWL…IFFF, ICIC…HFQL, GLSI…TLAA, SRLF…IGSF, LLLF…LLSM, FILY…GMGL, ALEI…SPII, HYST…YGLV, AHSI…IYAA, IAYS…SITD, GAIL…FLAG, IFTM…GFVA, ILIT…SLSM, and LFVS…PDFV.

The protein belongs to the complex I subunit 4 family.

Its subcellular location is the plastid. It is found in the chloroplast thylakoid membrane. It catalyses the reaction a plastoquinone + NADH + (n+1) H(+)(in) = a plastoquinol + NAD(+) + n H(+)(out). It carries out the reaction a plastoquinone + NADPH + (n+1) H(+)(in) = a plastoquinol + NADP(+) + n H(+)(out). This chain is NAD(P)H-quinone oxidoreductase chain 4, chloroplastic, found in Liriodendron tulipifera (Tuliptree).